The sequence spans 333 residues: Homeobox protein engrailed-1 (333 aa).

Residues 1 to 14 (MEEPPEGHGHHRDA) are compositionally biased toward basic and acidic residues. 2 disordered regions span residues 1 to 184 (MEEP…AAKY) and 226 to 247 (RPSSPRTRKLKKKKTEKEDKRP). The segment covering 20–31 (ANGGGGGGGGSD) has biased composition (gly residues). Positions 38 to 66 (SPSPAPASPAAPCPLPLPRRRPPPPPPPR) are enriched in pro residues. Residues 94-104 (TGAGGGGGGGG) show a composition bias toward gly residues. The span at 144–173 (DGSAPAGTAAKANPGTAAGAAGAAGAAKAQ) shows a compositional bias: low complexity. The homeobox DNA-binding region spans 244-303 (DKRPRTAFTAEQLQRLKAEFQANRYITEQRRQSLAQELSLNESRVKIWFQNKRAKIKKAT).

This sequence belongs to the engrailed homeobox family.

The protein resides in the nucleus. In terms of biological role, required for proper formation of the apical ectodermal ridge and correct dorsal-ventral patterning in the limb. The polypeptide is Homeobox protein engrailed-1 (EN1) (Gallus gallus (Chicken)).